Consider the following 455-residue polypeptide: Bifunctional protein GlmU (455 aa).

The tract at residues 1 to 227 (MGLSVIILAA…CEEVQGVNDR (227 aa)) is pyrophosphorylase. UDP-N-acetyl-alpha-D-glucosamine is bound by residues 8–11 (LAAG), Lys-22, Gln-73, 78–79 (GT), 100–102 (YGD), Gly-137, Glu-152, Asn-167, and Asn-225. Residue Asp-102 participates in Mg(2+) binding. Residue Asn-225 coordinates Mg(2+). The linker stretch occupies residues 228–248 (WELTKLERYYQRLMAKKLSLA). Positions 249 to 455 (GVTIIDPERF…KGWHRPTKKE (207 aa)) are N-acetyltransferase. UDP-N-acetyl-alpha-D-glucosamine contacts are provided by Arg-332 and Lys-350. His-362 serves as the catalytic Proton acceptor. Residues Tyr-365 and Asn-376 each contribute to the UDP-N-acetyl-alpha-D-glucosamine site. Acetyl-CoA-binding positions include Ala-379, 385–386 (NY), Ser-404, Ala-422, and Arg-439.

It in the N-terminal section; belongs to the N-acetylglucosamine-1-phosphate uridyltransferase family. This sequence in the C-terminal section; belongs to the transferase hexapeptide repeat family. In terms of assembly, homotrimer. It depends on Mg(2+) as a cofactor.

The protein resides in the cytoplasm. It catalyses the reaction alpha-D-glucosamine 1-phosphate + acetyl-CoA = N-acetyl-alpha-D-glucosamine 1-phosphate + CoA + H(+). The enzyme catalyses N-acetyl-alpha-D-glucosamine 1-phosphate + UTP + H(+) = UDP-N-acetyl-alpha-D-glucosamine + diphosphate. It participates in nucleotide-sugar biosynthesis; UDP-N-acetyl-alpha-D-glucosamine biosynthesis; N-acetyl-alpha-D-glucosamine 1-phosphate from alpha-D-glucosamine 6-phosphate (route II): step 2/2. It functions in the pathway nucleotide-sugar biosynthesis; UDP-N-acetyl-alpha-D-glucosamine biosynthesis; UDP-N-acetyl-alpha-D-glucosamine from N-acetyl-alpha-D-glucosamine 1-phosphate: step 1/1. The protein operates within bacterial outer membrane biogenesis; LPS lipid A biosynthesis. Catalyzes the last two sequential reactions in the de novo biosynthetic pathway for UDP-N-acetylglucosamine (UDP-GlcNAc). The C-terminal domain catalyzes the transfer of acetyl group from acetyl coenzyme A to glucosamine-1-phosphate (GlcN-1-P) to produce N-acetylglucosamine-1-phosphate (GlcNAc-1-P), which is converted into UDP-GlcNAc by the transfer of uridine 5-monophosphate (from uridine 5-triphosphate), a reaction catalyzed by the N-terminal domain. The protein is Bifunctional protein GlmU of Coxiella burnetii (strain Dugway 5J108-111).